We begin with the raw amino-acid sequence, 57 residues long: uncharacterized protein (57 aa).

A helical membrane pass occupies residues 34–54 (AALLDAAALVVIPGLLTAAAV).

Its subcellular location is the membrane. This is an uncharacterized protein from Dictyostelium discoideum (Social amoeba).